The sequence spans 36 residues: Photosystem I reaction center subunit VIII (36 aa).

The helical transmembrane segment at 8 to 28 threads the bilayer; that stretch reads SFFVPLVCLVFPAIAMAFLFV.

The protein belongs to the PsaI family.

Its subcellular location is the plastid. It localises to the chloroplast thylakoid membrane. May help in the organization of the PsaL subunit. This chain is Photosystem I reaction center subunit VIII, found in Chara vulgaris (Common stonewort).